Here is a 136-residue protein sequence, read N- to C-terminus: Large ribosomal subunit protein uL16 (136 aa).

Belongs to the universal ribosomal protein uL16 family. As to quaternary structure, part of the 50S ribosomal subunit.

Binds 23S rRNA and is also seen to make contacts with the A and possibly P site tRNAs. This chain is Large ribosomal subunit protein uL16, found in Serratia proteamaculans (strain 568).